A 224-amino-acid chain; its full sequence is Synaptogyrin-2 (224 aa).

Methionine 1 bears the N-acetylmethionine mark. Position 3 is a phosphoserine (serine 3). The MARVEL domain maps to 20–171 (FLTQPQVVAR…LASLAYQRYK (152 aa)). Transmembrane regions (helical) follow at residues 26 to 46 (VVAR…IYGE), 73 to 93 (AIGV…AYFP), 105 to 125 (VIGD…GFCF), and 147 to 167 (AAIT…SLAY).

Belongs to the synaptogyrin family. As to quaternary structure, (Microbial infection) Interacts with SFTS phlebovirus protein NSs; may be involved in virus replication. May be tyrosine phosphorylated by Src. As to expression, ubiquitous; low expression in brain.

The protein resides in the cytoplasmic vesicle membrane. Its subcellular location is the cytoplasmic vesicle. It localises to the secretory vesicle. It is found in the synaptic vesicle membrane. The protein localises to the lipid droplet. Functionally, may play a role in regulated exocytosis. In neuronal cells, modulates the localization of synaptophysin/SYP into synaptic-like microvesicles and may therefore play a role in the formation and/or the maturation of this vesicles. May also play a role in GLUT4 storage and transport to the plasma membrane. In terms of biological role, (Microbial infection) May play a role in the assembly of cytoplasmic inclusion bodies required for SFTS phlebovirus replication. In Homo sapiens (Human), this protein is Synaptogyrin-2.